The sequence spans 1247 residues: DNA-directed RNA polymerase subunit beta (1247 aa).

Belongs to the RNA polymerase beta chain family. In plastids the minimal PEP RNA polymerase catalytic core is composed of four subunits: alpha, beta, beta', and beta''. When a (nuclear-encoded) sigma factor is associated with the core the holoenzyme is formed, which can initiate transcription.

It localises to the plastid. The enzyme catalyses RNA(n) + a ribonucleoside 5'-triphosphate = RNA(n+1) + diphosphate. Its function is as follows. DNA-dependent RNA polymerase catalyzes the transcription of DNA into RNA using the four ribonucleoside triphosphates as substrates. This is DNA-directed RNA polymerase subunit beta (rpoB) from Helicosporidium sp. subsp. Simulium jonesii (Green alga).